Here is a 720-residue protein sequence, read N- to C-terminus: Neurochondrin (720 aa).

The protein belongs to the neurochondrin family.

Its subcellular location is the cytoplasm. It is found in the cytosol. It localises to the cell projection. The protein localises to the dendrite. The protein resides in the postsynapse. Probably involved in signal transduction, in the nervous system. Required for the spatial learning process. May also be involved in neurite outgrowth. In Xenopus laevis (African clawed frog), this protein is Neurochondrin (ncdn).